The sequence spans 386 residues: Transcription factor GTE1 (386 aa).

Disordered regions lie at residues 66–106 (GAAQ…KHVS) and 340–386 (ANKS…AKKA). Residues 68–78 (AQTNTSKSNSG) are compositionally biased toward polar residues. A Bromo domain is found at 105-211 (VSSPDLMRQF…EKFEEKWLLI (107 aa)). The NET domain maps to 263–344 (RESVVQRCRK…EALKAANKSS (82 aa)). The span at 345 to 358 (GGTNAQNNNNTGTG) shows a compositional bias: low complexity.

Barely detectable in stems, leaves, siliques, and dry seeds, but was present at considerable levels in roots, flowers and imbibited seeds.

The protein resides in the nucleus. Functionally, transcription activator that plays a role in the promotion of seed germination by both negatively and positively regulating the abscisic acid (ABA) and phytochrome A (phyA) transduction pathways, respectively. The polypeptide is Transcription factor GTE1 (GTE1) (Arabidopsis thaliana (Mouse-ear cress)).